A 389-amino-acid polypeptide reads, in one-letter code: S-adenosylmethionine synthase 3 (389 aa).

Residue glutamate 9 participates in Mg(2+) binding. Residue histidine 15 coordinates ATP. Glutamate 43 lines the K(+) pocket. L-methionine-binding residues include glutamate 56 and glutamine 99. Residues 167–169 (DGK), 235–238 (SGRF), aspartate 246, 252–253 (RK), alanine 269, lysine 273, and lysine 277 contribute to the ATP site. Aspartate 246 provides a ligand contact to L-methionine. Lysine 277 contacts L-methionine.

It belongs to the AdoMet synthase family. In terms of assembly, homotetramer. The cofactor is Mn(2+). Requires Mg(2+) as cofactor. It depends on Co(2+) as a cofactor. K(+) is required as a cofactor.

It is found in the cytoplasm. The enzyme catalyses L-methionine + ATP + H2O = S-adenosyl-L-methionine + phosphate + diphosphate. Its pathway is amino-acid biosynthesis; S-adenosyl-L-methionine biosynthesis; S-adenosyl-L-methionine from L-methionine: step 1/1. Functionally, catalyzes the formation of S-adenosylmethionine from methionine and ATP. The reaction comprises two steps that are both catalyzed by the same enzyme: formation of S-adenosylmethionine (AdoMet) and triphosphate, and subsequent hydrolysis of the triphosphate. The chain is S-adenosylmethionine synthase 3 (METK3) from Vitis vinifera (Grape).